Here is a 140-residue protein sequence, read N- to C-terminus: Large ribosomal subunit protein uL13 (140 aa).

As to quaternary structure, part of the 50S ribosomal subunit.

Functionally, this protein is one of the early assembly proteins of the 50S ribosomal subunit, although it is not seen to bind rRNA by itself. It is important during the early stages of 50S assembly. In Thermus thermophilus (strain ATCC 27634 / DSM 579 / HB8), this protein is Large ribosomal subunit protein uL13.